A 75-amino-acid polypeptide reads, in one-letter code: CDC42 small effector protein 1 (75 aa).

Residues cysteine 10 and cysteine 11 are each lipidated (S-palmitoyl cysteine). The region spanning 30-43 (IGEPTNFVHLTHIG) is the CRIB domain. Positions 45 to 75 (GEMADGMQPSGPIKEQMRSKVPHANGRNSLL) are disordered.

It belongs to the CDC42SE/SPEC family.

It is found in the cytoplasm. It localises to the cytoskeleton. The protein resides in the cell membrane. Its function is as follows. Probably involved in the organization of the actin cytoskeleton by acting downstream of CDC42, inducing actin filament assembly. The polypeptide is CDC42 small effector protein 1 (cdc42se1) (Danio rerio (Zebrafish)).